We begin with the raw amino-acid sequence, 1231 residues long: RNA-binding protein 33 (1231 aa).

The span at 1 to 13 (MAAALGAGGGAGA) shows a compositional bias: gly residues. 2 disordered regions span residues 1–168 (MAAA…EEEQ) and 219–261 (SQVA…FKTE). A2 carries the post-translational modification N-acetylalanine. The segment covering 20–36 (QFDKPGAERSWRRRAAD) has biased composition (basic and acidic residues). Residues 37–49 (EDWDSELEDDLLG) show a composition bias toward acidic residues. Position 41 is a phosphoserine (S41). Over residues 82 to 108 (FSSQGVTISLNTTSGIVTSFELSDNTN) the composition is skewed to polar residues. Acidic residues-rich tracts occupy residues 112–124 (GEQESEYEQGDDE) and 153–168 (LTEDQIEYGDEPEEEQ). Over residues 224-240 (ETHEGGMETLELQKDIK) the composition is skewed to basic and acidic residues. Positions 241-252 (EESDEEDDDDEE) are enriched in acidic residues. 2 positions are modified to phosphoserine: S243 and S271. Disordered stretches follow at residues 297–436 (FEER…KNIH) and 452–761 (PLLP…NLRE). Residues 305–316 (KQGRYGSRRGGR) are compositionally biased toward basic residues. The span at 327-344 (GDQRRDNSERGRMKEHRP) shows a compositional bias: basic and acidic residues. Residues 360–379 (LIPPPQPQPPPPPPPPPPQQ) are compositionally biased toward pro residues. Residues 380-398 (QPIRSLFQQQQLQPLLPLQ) show a composition bias toward low complexity. The segment covering 469–483 (FPGPPEFPQHTPGPV) has biased composition (pro residues). R520 carries the asymmetric dimethylarginine modification. Pro residues-rich tracts occupy residues 531–540 (SPPPPPPPPT), 604–618 (FIPPRQPFLPSPGQP), 632–647 (LHPPLPPPHQPQPQPQ), and 661–682 (PLQPPLQPPHQPPPQHQPPPQH). 2 stretches are compositionally biased toward polar residues: residues 713-728 (QTAQPQPSSSRMQCTP) and 736-759 (AASQNISKRPMQQMQPTAPRNSNL). S792 and S816 each carry phosphoserine. 3 disordered regions span residues 796-840 (RAVV…ETRL), 876-932 (ERLA…FPGA), and 998-1080 (ETPH…MRQQ). Residues 820-829 (QPKEEAKPEA) are compositionally biased toward basic and acidic residues. Positions 840-891 (LYRLKIEEQKRLREEILKQKELRRQQQAGARKKELLERLAQQQQQQQQQQHQ) form a coiled coil. Residues 880–901 (QQQQQQQQQQHQPQQQQQQPQQ) are compositionally biased toward low complexity. A phosphoserine mark is found at S1002 and S1010. A Glycyl lysine isopeptide (Lys-Gly) (interchain with G-Cter in SUMO2) cross-link involves residue K1019. Residues S1032 and S1051 each carry the phosphoserine modification.

As to quaternary structure, associates with the NXF1-NXT1 RNA export complex. Interacts with ALKBH5; facilitating ALKBH5 recruitment to m6A-containing transcripts. Interacts with SENP1; promoting ALKBH5 deSUMOylation and subsequent activation.

It localises to the nucleus. The protein resides in the cytoplasm. Its function is as follows. RNA reader protein, which recognizes and binds specific RNAs, thereby regulating RNA metabolic processes, such as mRNA export, mRNA stability and/or translation. Binds a subset of intronless RNAs containing GC-rich elements, such as NORAD, and promotes their nuclear export by recruiting target RNAs to components of the NXF1-NXT1 RNA export machinery. Specifically recognizes and binds N6-methyladenosine (m6A)-containing mRNAs, promoting their demethylation by ALKBH5. Acts as an molecular adapter, which (1) promotes ALKBH5 recruitment to m6A-containing transcripts and (2) activates ALKBH5 demethylase activity by recruiting SENP1, leading to ALKBH5 deSUMOylation and subsequent activation. In Mus musculus (Mouse), this protein is RNA-binding protein 33.